The primary structure comprises 179 residues: Natural killer cells antigen CD94 (179 aa).

Topologically, residues 1–10 (MAVSRITRWR) are cytoplasmic. Residues 11–31 (LMSVIFGIKCLFLMVTLGVLL) form a helical; Signal-anchor for type II membrane protein membrane-spanning segment. At 32 to 179 (INSFTIQNIQ…NRYICKKLPI (148 aa)) the chain is on the extracellular side. Disulfide bonds link C58–C70, C61–C72, C89–C174, and C152–C166. Residues 68-175 (HQCNCYFISK…CENKNRYICK (108 aa)) enclose the C-type lectin domain. Residues N93 and N109 are each glycosylated (N-linked (GlcNAc...) asparagine).

As to quaternary structure, can form disulfide-bonded heterodimer with NKG2 family members KLRC1 and KLRC2. KLRD1-KLRC1 heterodimer interacts with peptide-bound MHC-E-B2M heterotrimeric complex. KLRD1 plays a prominent role in directly interacting with MHC-E. KLRD1-KLRC1 interacts with much higher affinity with peptide-bound MHC-E-B2M than KLRD1-KLRC2. Interacts with the adapter protein TYROBP/DAP12; this interaction is required for cell surface expression and cell activation.

The protein localises to the cell membrane. Immune receptor involved in self-nonself discrimination. In complex with KLRC1 or KLRC2 on cytotoxic and regulatory lymphocyte subsets, recognizes non-classical major histocompatibility (MHC) class Ib molecule MHC-E loaded with self-peptides derived from the signal sequence of classical MHC class Ia and non-classical MHC class Ib molecules. Enables cytotoxic cells to monitor the expression of MHC class I molecules in healthy cells and to tolerate self. Primarily functions as a ligand binding subunit as it lacks the capacity to signal. Functionally, KLRD1-KLRC1 acts as an immune inhibitory receptor. Key inhibitory receptor on natural killer (NK) cells that regulates their activation and effector functions. Dominantly counteracts T cell receptor signaling on a subset of memory/effector CD8-positive T cells as part of an antigen-driven response to avoid autoimmunity. On intraepithelial CD8-positive gamma-delta regulatory T cells triggers TGFB1 secretion, which in turn limits the cytotoxic programming of intraepithelial CD8-positive alpha-beta T cells, distinguishing harmless from pathogenic antigens. In MHC-E-rich tumor microenvironment, acts as an immune inhibitory checkpoint and may contribute to progressive loss of effector functions of NK cells and tumor-specific T cells, a state known as cell exhaustion. Upon MHC-E-peptide binding, transmits intracellular signals through KLRC1 immunoreceptor tyrosine-based inhibition motifs (ITIMs) by recruiting INPP5D/SHIP-1 and INPPL1/SHIP-2 tyrosine phosphatases to ITIMs, and ultimately opposing signals transmitted by activating receptors through dephosphorylation of proximal signaling molecules. In terms of biological role, KLRD1-KLRC2 acts as an immune activating receptor. On cytotoxic lymphocyte subsets recognizes MHC-E loaded with signal sequence-derived peptides from non-classical MHC class Ib MHC-G molecules, likely playing a role in the generation and effector functions of adaptive NK cells and in maternal-fetal tolerance during pregnancy. Regulates the effector functions of terminally differentiated cytotoxic lymphocyte subsets, and in particular may play a role in adaptive NK cell response to viral infection. Upon MHC-E-peptide binding, transmits intracellular signals via the adapter protein TYROBP/DAP12, triggering the phosphorylation of proximal signaling molecules and cell activation. This is Natural killer cells antigen CD94 (Klrd1) from Mus musculus (Mouse).